The sequence spans 215 residues: Cytochrome b6 (215 aa).

A helical transmembrane segment spans residues 32–52 (IFHCLGGITLTCFLVQVATGF). Cys35 provides a ligand contact to heme c. Heme b is bound by residues His86 and His100. A run of 3 helical transmembrane segments spans residues 90–110 (ASMM…TGGF), 116–136 (LTWV…VTGY), and 186–206 (LHTF…FPMI). Heme b-binding residues include His187 and His202.

Belongs to the cytochrome b family. PetB subfamily. The 4 large subunits of the cytochrome b6-f complex are cytochrome b6, subunit IV (17 kDa polypeptide, PetD), cytochrome f and the Rieske protein, while the 4 small subunits are PetG, PetL, PetM and PetN. The complex functions as a dimer. It depends on heme b as a cofactor. Heme c serves as cofactor.

Its subcellular location is the plastid. The protein resides in the chloroplast thylakoid membrane. Component of the cytochrome b6-f complex, which mediates electron transfer between photosystem II (PSII) and photosystem I (PSI), cyclic electron flow around PSI, and state transitions. This is Cytochrome b6 from Calycanthus floridus var. glaucus (Eastern sweetshrub).